We begin with the raw amino-acid sequence, 342 residues long: Dihydroorotate dehydrogenase (quinone) (342 aa).

Residues 60–64 (AGLDK) and Thr84 contribute to the FMN site. A substrate-binding site is contributed by Lys64. 109-113 (NRMGF) is a substrate binding site. FMN-binding residues include Asn137 and Asn170. Residue Asn170 coordinates substrate. Ser173 serves as the catalytic Nucleophile. Asn175 contacts substrate. Residues Lys215 and Thr243 each contribute to the FMN site. 244 to 245 (NT) lines the substrate pocket. FMN is bound by residues Gly266, Gly295, and 316–317 (YS).

Belongs to the dihydroorotate dehydrogenase family. Type 2 subfamily. Monomer. It depends on FMN as a cofactor.

It is found in the cell membrane. It catalyses the reaction (S)-dihydroorotate + a quinone = orotate + a quinol. It participates in pyrimidine metabolism; UMP biosynthesis via de novo pathway; orotate from (S)-dihydroorotate (quinone route): step 1/1. In terms of biological role, catalyzes the conversion of dihydroorotate to orotate with quinone as electron acceptor. In Nitrosomonas europaea (strain ATCC 19718 / CIP 103999 / KCTC 2705 / NBRC 14298), this protein is Dihydroorotate dehydrogenase (quinone).